The following is a 285-amino-acid chain: Acetylglutamate kinase (285 aa).

Substrate-binding positions include 64-65 (GG), arginine 86, and asparagine 181.

The protein belongs to the acetylglutamate kinase family. ArgB subfamily.

It is found in the cytoplasm. The catalysed reaction is N-acetyl-L-glutamate + ATP = N-acetyl-L-glutamyl 5-phosphate + ADP. It functions in the pathway amino-acid biosynthesis; L-arginine biosynthesis; N(2)-acetyl-L-ornithine from L-glutamate: step 2/4. Functionally, catalyzes the ATP-dependent phosphorylation of N-acetyl-L-glutamate. The polypeptide is Acetylglutamate kinase (Clostridium beijerinckii (strain ATCC 51743 / NCIMB 8052) (Clostridium acetobutylicum)).